A 118-amino-acid polypeptide reads, in one-letter code: Large ribosomal subunit protein bL20 (118 aa).

The protein belongs to the bacterial ribosomal protein bL20 family.

Its function is as follows. Binds directly to 23S ribosomal RNA and is necessary for the in vitro assembly process of the 50S ribosomal subunit. It is not involved in the protein synthesizing functions of that subunit. The chain is Large ribosomal subunit protein bL20 from Francisella philomiragia subsp. philomiragia (strain ATCC 25017 / CCUG 19701 / FSC 153 / O#319-036).